Consider the following 581-residue polypeptide: Arginine--tRNA ligase (581 aa).

Positions 122-132 match the 'HIGH' region motif; it reads PNVAKPMHVGH.

The protein belongs to the class-I aminoacyl-tRNA synthetase family. As to quaternary structure, monomer.

The protein resides in the cytoplasm. The catalysed reaction is tRNA(Arg) + L-arginine + ATP = L-arginyl-tRNA(Arg) + AMP + diphosphate. This is Arginine--tRNA ligase from Francisella tularensis subsp. holarctica (strain FTNF002-00 / FTA).